The sequence spans 230 residues: Cytidylate kinase (230 aa).

An ATP-binding site is contributed by 12–20 (GPSGAGKGT).

It belongs to the cytidylate kinase family. Type 1 subfamily.

The protein resides in the cytoplasm. It carries out the reaction CMP + ATP = CDP + ADP. The catalysed reaction is dCMP + ATP = dCDP + ADP. The sequence is that of Cytidylate kinase from Shewanella halifaxensis (strain HAW-EB4).